The chain runs to 126 residues: Aspartate 1-decarboxylase (126 aa).

The Schiff-base intermediate with substrate; via pyruvic acid role is filled by serine 25. Pyruvic acid (Ser) is present on serine 25. Threonine 57 is a substrate binding site. Tyrosine 58 acts as the Proton donor in catalysis. 73–75 (GAA) is a binding site for substrate.

The protein belongs to the PanD family. Heterooctamer of four alpha and four beta subunits. Requires pyruvate as cofactor. In terms of processing, is synthesized initially as an inactive proenzyme, which is activated by self-cleavage at a specific serine bond to produce a beta-subunit with a hydroxyl group at its C-terminus and an alpha-subunit with a pyruvoyl group at its N-terminus.

It is found in the cytoplasm. The catalysed reaction is L-aspartate + H(+) = beta-alanine + CO2. Its pathway is cofactor biosynthesis; (R)-pantothenate biosynthesis; beta-alanine from L-aspartate: step 1/1. In terms of biological role, catalyzes the pyruvoyl-dependent decarboxylation of aspartate to produce beta-alanine. This chain is Aspartate 1-decarboxylase, found in Cronobacter sakazakii (strain ATCC BAA-894) (Enterobacter sakazakii).